A 212-amino-acid polypeptide reads, in one-letter code: Large ribosomal subunit protein uL3 (212 aa).

Residues 117-142 (TSKGKGFQGNIKRHNQSRGPMTHGSR) form a disordered region.

Belongs to the universal ribosomal protein uL3 family. In terms of assembly, part of the 50S ribosomal subunit. Forms a cluster with proteins L14 and L19.

Its function is as follows. One of the primary rRNA binding proteins, it binds directly near the 3'-end of the 23S rRNA, where it nucleates assembly of the 50S subunit. The sequence is that of Large ribosomal subunit protein uL3 from Acholeplasma laidlawii (strain PG-8A).